The primary structure comprises 480 residues: Glycerol 3-phosphate dehydrogenase (480 aa).

FAD contacts are provided by residues I12, E31, 40 to 41, and 45 to 47; these read TT and SAI. The sn-glycerol 3-phosphate site is built by S45 and H49. Residue H49 is the Proton acceptor of the active site. Position 172 (V172) interacts with FAD. Residues K249 and R310 each coordinate sn-glycerol 3-phosphate. 335–336 is an FAD binding site; it reads IE. S337 serves as a coordination point for sn-glycerol 3-phosphate. S341 lines the FAD pocket. Residues C400, C402, C437, and C442 each contribute to the [2Fe-2S] cluster site.

It depends on [2Fe-2S] cluster as a cofactor.

It carries out the reaction sn-glycerol 3-phosphate + A = dihydroxyacetone phosphate + AH2. It participates in polyol metabolism; glycerol degradation via glycerol kinase pathway; glycerone phosphate from sn-glycerol 3-phosphate (aerobic route): step 1/1. Catalyzes the dehydrogenation of glycerol 3-phosphate to dihydroxyacetone phosphate. Is probably involved in anaerobic glycerol metabolism. Active in vitro with the artificial electron acceptor 2,6-dichlorophenolindophenol (DCPIP), but not with NAD or NADP. Also displays a very low oxidase activity in vitro on glycerol 3-phosphate with O2 as the electron acceptor, but this activity is most likely not physiological. In Caloramator mitchellensis, this protein is Glycerol 3-phosphate dehydrogenase.